The sequence spans 463 residues: Nitrogenase iron-molybdenum cofactor biosynthesis protein NifE (463 aa).

Belongs to the NifD/NifK/NifE/NifN family.

It functions in the pathway cofactor biosynthesis; Fe-Mo cofactor biosynthesis. Its function is as follows. This protein may play a role in the biosynthesis of the prosthetic group of nitrogenase (FeMo cofactor). This Methanosarcina barkeri protein is Nitrogenase iron-molybdenum cofactor biosynthesis protein NifE (nifE2).